The chain runs to 192 residues: Pyridoxal 5'-phosphate synthase subunit PdxT (192 aa).

47–49 is an L-glutamine binding site; it reads GES. The Nucleophile role is filled by cysteine 79. L-glutamine contacts are provided by residues arginine 106 and 134-135; that span reads IR. Residues histidine 170 and glutamate 172 each act as charge relay system in the active site.

Belongs to the glutaminase PdxT/SNO family. As to quaternary structure, in the presence of PdxS, forms a dodecamer of heterodimers. Only shows activity in the heterodimer.

The catalysed reaction is aldehydo-D-ribose 5-phosphate + D-glyceraldehyde 3-phosphate + L-glutamine = pyridoxal 5'-phosphate + L-glutamate + phosphate + 3 H2O + H(+). The enzyme catalyses L-glutamine + H2O = L-glutamate + NH4(+). It participates in cofactor biosynthesis; pyridoxal 5'-phosphate biosynthesis. In terms of biological role, catalyzes the hydrolysis of glutamine to glutamate and ammonia as part of the biosynthesis of pyridoxal 5'-phosphate. The resulting ammonia molecule is channeled to the active site of PdxS. The sequence is that of Pyridoxal 5'-phosphate synthase subunit PdxT from Anoxybacillus flavithermus (strain DSM 21510 / WK1).